Consider the following 61-residue polypeptide: Venom protein 22.1 (61 aa).

Residues 1-18 (MDIKGLLVILFFVLLITG) form the signal peptide.

This sequence belongs to the non-disulfide-bridged peptide (NDBP) superfamily. Long chain multifunctional peptide (group 2) family. In terms of tissue distribution, expressed by the venom gland.

The protein localises to the secreted. This is Venom protein 22.1 from Lychas mucronatus (Chinese swimming scorpion).